A 389-amino-acid chain; its full sequence is Phenylpropanoylacetyl-CoA synthase (389 aa).

The active site involves cysteine 163.

Belongs to the thiolase-like superfamily. Chalcone/stilbene synthases family. As to quaternary structure, homodimer. In terms of tissue distribution, expressed in both the leaf and rhizome, with higher expression in the rhizome.

The enzyme catalyses (E)-feruloyl-CoA + malonyl-CoA + H(+) = (E)-feruloylacetyl-CoA + CO2 + CoA. The catalysed reaction is 4-coumaroyl-CoA + malonyl-CoA + H(+) = (4-coumaroyl)acetyl-CoA + CO2 + CoA. It participates in secondary metabolite biosynthesis; flavonoid biosynthesis. Catalyzes the formation of feruloyldiketide-CoA by condensing feruloyl-CoA and malonyl-CoA in the curcuminoid biosynthesis. Has no activity with cinnamoyl-CoA. The sequence is that of Phenylpropanoylacetyl-CoA synthase (DCS) from Curcuma longa (Turmeric).